We begin with the raw amino-acid sequence, 568 residues long: Phosphoprotein (568 aa).

Disordered regions lie at residues 1-23 (MDQDAFILKEDSEVEREAPGGRE) and 38-320 (SEPT…GIGE). Over residues 7–20 (ILKEDSEVEREAPG) the composition is skewed to basic and acidic residues. Positions 33–41 (DAVLSSEPT) are N0 binding. Over residues 50 to 59 (LHNTINTPQG) the composition is skewed to polar residues. S68 carries the phosphoserine; by host modification. Over residues 83–101 (RSGEESRVSGRTSKPEAEA) the composition is skewed to basic and acidic residues. A Phosphoserine; by host modification is found at S125. Over residues 150–168 (GIEDENREMAAHPDKRGED) the composition is skewed to basic and acidic residues. The segment covering 191–206 (ASNNGRSMEPGSSHSA) has biased composition (polar residues). A phosphoserine; by host mark is found at S192, S249, S257, and S260. Residues 344 to 411 (FESSRDASYV…SFRDTYKRFS (68 aa)) form a multimerization region. Positions 364–429 (YAEMTFNVCG…LLMSNLSTLH (66 aa)) form a coiled coil. The l protein binding stretch occupies residues 412–445 (EYQKEQNSLLMSNLSTLHIITDRGGKTDNTDSLT). A phosphoserine; by host mark is found at S447 and S449. The tract at residues 479 to 568 (DLIREDEFRD…VEEDIESLTN (90 aa)) is interaction with the nucleocapsid (N-RNA). The tract at residues 496-516 (QERDTEPRASNASRLLPSKEK) is disordered.

This sequence belongs to the respirovirus P protein family. Homotetramer. Interacts (via multimerization domain) with polymerase L; this interaction forms the polymerase complex. Interacts (via N-terminus) with N0; this interaction allows P to chaperon N0 before encapsidation and form the N-P complex. Interacts (via C-terminus) with N-RNA template; this interaction positions the polymerase on the template. Post-translationally, phosphorylated by PKC/PRKCZ, and other unknown kinases. Phosphorylation is necessary for viral transcription and replication. The N-terminus contains the majority of phosphorylated sites. Ser-249 is the major site of phosphorylation, but is not necessary for most functions.

Its function is as follows. Essential cofactor of the RNA polymerase L that plays a central role in the transcription and replication by forming the polymerase complex with RNA polymerase L and recruiting L to the genomic N-RNA template for RNA synthesis. Also plays a central role in the encapsidation of nascent RNA chains by forming the encapsidation complex with the nucleocapsid protein N (N-P complex). Acts as a chaperone for newly synthesized free N protein, so-called N0, allowing encapsidation of nascent RNA chains during replication. The nucleoprotein protein N prevents excessive phosphorylation of P, which leads to down-regulation of viral transcription/ replication. Participates, together with N, in the formation of viral factories (viroplasms), which are large inclusions in the host cytoplasm where replication takes place. Recruits host PI4KB and remodel the host endoplasmic reticulum membrane to form viral replication factories. This Sendai virus (strain Z) (SeV) protein is Phosphoprotein (P/V/C).